Here is a 136-residue protein sequence, read N- to C-terminus: Transport protein particle 20 kDa subunit (136 aa).

Belongs to the TRAPP small subunits family. Sedlin subfamily.

It is found in the cytoplasm. The protein resides in the golgi apparatus. The protein localises to the cis-Golgi network. Its subcellular location is the endoplasmic reticulum. Component of the TRAPP I and TRAPP II complexes. TRAPP I plays a key role in the late stages of endoplasmic reticulum to Golgi traffic. TRAPP II seems to play a role in intra-Golgi transport. In Schizosaccharomyces pombe (strain 972 / ATCC 24843) (Fission yeast), this protein is Transport protein particle 20 kDa subunit (trs20).